The following is a 557-amino-acid chain: Dihydroxy-acid dehydratase (557 aa).

D78 is a binding site for Mg(2+). Residue C119 coordinates [2Fe-2S] cluster. D120 and K121 together coordinate Mg(2+). An N6-carboxylysine modification is found at K121. C191 serves as a coordination point for [2Fe-2S] cluster. E442 provides a ligand contact to Mg(2+). S468 (proton acceptor) is an active-site residue.

It belongs to the IlvD/Edd family. In terms of assembly, homodimer. It depends on [2Fe-2S] cluster as a cofactor. The cofactor is Mg(2+).

The catalysed reaction is (2R)-2,3-dihydroxy-3-methylbutanoate = 3-methyl-2-oxobutanoate + H2O. The enzyme catalyses (2R,3R)-2,3-dihydroxy-3-methylpentanoate = (S)-3-methyl-2-oxopentanoate + H2O. Its pathway is amino-acid biosynthesis; L-isoleucine biosynthesis; L-isoleucine from 2-oxobutanoate: step 3/4. It functions in the pathway amino-acid biosynthesis; L-valine biosynthesis; L-valine from pyruvate: step 3/4. Functions in the biosynthesis of branched-chain amino acids. Catalyzes the dehydration of (2R,3R)-2,3-dihydroxy-3-methylpentanoate (2,3-dihydroxy-3-methylvalerate) into 2-oxo-3-methylpentanoate (2-oxo-3-methylvalerate) and of (2R)-2,3-dihydroxy-3-methylbutanoate (2,3-dihydroxyisovalerate) into 2-oxo-3-methylbutanoate (2-oxoisovalerate), the penultimate precursor to L-isoleucine and L-valine, respectively. The chain is Dihydroxy-acid dehydratase from Syntrophobacter fumaroxidans (strain DSM 10017 / MPOB).